Reading from the N-terminus, the 945-residue chain is Leucine--tRNA ligase (945 aa).

The short motif at 43–53 (PYPNGAIHIGH) is the 'HIGH' region element. The 'KMSKS' region motif lies at 638-642 (KMSKS). Residue K641 coordinates ATP.

The protein belongs to the class-I aminoacyl-tRNA synthetase family.

Its subcellular location is the cytoplasm. It carries out the reaction tRNA(Leu) + L-leucine + ATP = L-leucyl-tRNA(Leu) + AMP + diphosphate. The polypeptide is Leucine--tRNA ligase (Pyrobaculum aerophilum (strain ATCC 51768 / DSM 7523 / JCM 9630 / CIP 104966 / NBRC 100827 / IM2)).